The following is a 120-amino-acid chain: Large ribosomal subunit protein uL18 (120 aa).

Residues 1-26 (MKLTRRESKQRRHRRVRGKVQGSPER) form a disordered region. A compositionally biased stretch (basic residues) spans 8–18 (SKQRRHRRVRG).

This sequence belongs to the universal ribosomal protein uL18 family. In terms of assembly, part of the 50S ribosomal subunit; part of the 5S rRNA/L5/L18/L25 subcomplex. Contacts the 5S and 23S rRNAs.

In terms of biological role, this is one of the proteins that bind and probably mediate the attachment of the 5S RNA into the large ribosomal subunit, where it forms part of the central protuberance. The chain is Large ribosomal subunit protein uL18 from Trichormus variabilis (strain ATCC 29413 / PCC 7937) (Anabaena variabilis).